A 71-amino-acid polypeptide reads, in one-letter code: Prokaryotic ubiquitin-like protein Pup (71 aa).

The segment covering 1 to 18 (MATRDSGGQSQTGRSQQG) has biased composition (low complexity). Residues 1-42 (MATRDSGGQSQTGRSQQGEEIEDVTTEASAEAAERHAEITED) form a disordered region. The ARC ATPase binding stretch occupies residues 27 to 65 (EASAEAAERHAEITEDVDDLLDEIDSVLEENAEEFVRGY). The stretch at 29–60 (SAEAAERHAEITEDVDDLLDEIDSVLEENAEE) forms a coiled coil. An Isoglutamyl lysine isopeptide (Glu-Lys) (interchain with K-? in acceptor proteins) cross-link involves residue E71.

This sequence belongs to the prokaryotic ubiquitin-like protein family. Strongly interacts with the proteasome-associated ATPase ARC through a hydrophobic interface; the interacting region of Pup lies in its C-terminal half. There is one Pup binding site per ARC hexamer ring.

It participates in protein degradation; proteasomal Pup-dependent pathway. Protein modifier that is covalently attached to lysine residues of substrate proteins, thereby targeting them for proteasomal degradation. The tagging system is termed pupylation. This chain is Prokaryotic ubiquitin-like protein Pup, found in Salinispora tropica (strain ATCC BAA-916 / DSM 44818 / JCM 13857 / NBRC 105044 / CNB-440).